The primary structure comprises 311 residues: tRNA-cytidine(32) 2-sulfurtransferase (311 aa).

Residues 47-52 (SGGKDS) carry the PP-loop motif motif. Cys-122, Cys-125, and Cys-213 together coordinate [4Fe-4S] cluster.

Belongs to the TtcA family. As to quaternary structure, homodimer. It depends on Mg(2+) as a cofactor. Requires [4Fe-4S] cluster as cofactor.

The protein localises to the cytoplasm. It carries out the reaction cytidine(32) in tRNA + S-sulfanyl-L-cysteinyl-[cysteine desulfurase] + AH2 + ATP = 2-thiocytidine(32) in tRNA + L-cysteinyl-[cysteine desulfurase] + A + AMP + diphosphate + H(+). It functions in the pathway tRNA modification. Its function is as follows. Catalyzes the ATP-dependent 2-thiolation of cytidine in position 32 of tRNA, to form 2-thiocytidine (s(2)C32). The sulfur atoms are provided by the cysteine/cysteine desulfurase (IscS) system. This chain is tRNA-cytidine(32) 2-sulfurtransferase, found in Salmonella arizonae (strain ATCC BAA-731 / CDC346-86 / RSK2980).